The following is a 258-amino-acid chain: Spindlin-2 (258 aa).

A disordered region spans residues M1–R47. The span at Q13–T22 shows a compositional bias: basic and acidic residues. Residues M27 to G39 are compositionally biased toward basic residues. Tudor-like domain regions lie at residues V50–H99, I129–L178, and I210–V255. 2 histone H3K4me3 and H3R8me2a binding regions span residues E138 and D246–H248.

The protein belongs to the SPIN/STSY family. In terms of assembly, interacts with C11orf84/SPINDOC.

The protein localises to the nucleus. Functionally, may be involved in the regulation of cell cycle progression. Exhibits H3K4me3-binding activity. In Bos taurus (Bovine), this protein is Spindlin-2 (SPIN2).